Consider the following 551-residue polypeptide: Putative transport protein NTHI0043 (551 aa).

Transmembrane regions (helical) follow at residues 4 to 24 (IAIT…IGHW), 28 to 48 (GVGL…HFTN), 65 to 85 (FGLI…FFSS), 95 to 115 (AFAI…HKIA), and 157 to 177 (VSYA…MWLI). 2 consecutive RCK C-terminal domains span residues 191-275 (RFNA…IIGY) and 277-360 (VDAP…VIGN). 6 consecutive transmembrane segments (helical) span residues 370–390 (MLPV…PFYI), 402–424 (AGGP…LYWF), 438–458 (IVLF…DTLV), 463–483 (LEWM…TGIL), 492–512 (YLTI…LAFA), and 529–549 (VYPL…VLLW).

Belongs to the AAE transporter (TC 2.A.81) family. YidE subfamily.

It localises to the cell membrane. This Haemophilus influenzae (strain 86-028NP) protein is Putative transport protein NTHI0043.